The following is a 372-amino-acid chain: E3 ubiquitin-protein ligase RNF34 (372 aa).

Residues 56–107 (EGPNIVCKACGLSFSVFRKKHVCCDCKKDFCSVCSVLQENLRRCSTCHLLQE) form an FYVE-type zinc finger. The 20-residue stretch at 115–134 (LMRLKVKDLRQYLILRNIPI) folds into the SAP 1 domain. Ser-169 is subject to Phosphoserine. A disordered region spans residues 194-253 (QGELMDGDQTSRSGVPAQVQSEITSANTEDDDDDDDEDDDDEEENAEDRNPGLSKERVRA). The span at 201 to 220 (DQTSRSGVPAQVQSEITSAN) shows a compositional bias: polar residues. The span at 221–239 (TEDDDDDDDEDDDDEEENA) shows a compositional bias: acidic residues. Over residues 240–252 (EDRNPGLSKERVR) the composition is skewed to basic and acidic residues. Phosphoserine occurs at positions 254 and 256. One can recognise an SAP 2 domain in the interval 264 to 278 (VEGMSVRQLKEILAR). The RING-type zinc-finger motif lies at 325–360 (CRICMDAVIDCVLLECGHMVTCTKCGKRMSECPICR).

In terms of assembly, interacts with CASP8 and CASP10. Interacts (via RING-type zinc finger) with PPARGC1A. Interacts with NOD1. Interacts with p53/TP53; involved in p53/TP53 ubiquitination. Interacts (via RING-type zinc finger) with MDM2; the interaction stabilizes MDM2. Autoubiquitinated (in vitro). Post-translationally, proteolytically cleaved by caspases upon induction of apoptosis by TNF. Ubiquitous. Detected in heart, brain, liver, skeletal muscle, kidney, pancreas, spleen, thymus, prostate, testis, ovary, colon and leukocytes.

The protein localises to the cell membrane. It localises to the endomembrane system. It is found in the nucleus. Its subcellular location is the nucleus speckle. The protein resides in the cytoplasm. The protein localises to the cytosol. It carries out the reaction S-ubiquitinyl-[E2 ubiquitin-conjugating enzyme]-L-cysteine + [acceptor protein]-L-lysine = [E2 ubiquitin-conjugating enzyme]-L-cysteine + N(6)-ubiquitinyl-[acceptor protein]-L-lysine.. The protein operates within protein modification; protein ubiquitination. E3 ubiquitin-protein ligase that regulates several biological processes through the ubiquitin-mediated proteasomal degradation of various target proteins. Ubiquitinates the caspases CASP8 and CASP10, promoting their proteasomal degradation, to negatively regulate cell death downstream of death domain receptors in the extrinsic pathway of apoptosis. May mediate 'Lys-48'-linked polyubiquitination of RIPK1 and its subsequent proteasomal degradation thereby indirectly regulating the tumor necrosis factor-mediated signaling pathway. Negatively regulates p53/TP53 through its direct ubiquitination and targeting to proteasomal degradation. Indirectly, may also negatively regulate p53/TP53 through ubiquitination and degradation of SFN. Mediates PPARGC1A proteasomal degradation probably through ubiquitination thereby indirectly regulating the metabolism of brown fat cells. Possibly involved in innate immunity, through 'Lys-48'-linked polyubiquitination of NOD1 and its subsequent proteasomal degradation. This is E3 ubiquitin-protein ligase RNF34 from Homo sapiens (Human).